Here is a 294-residue protein sequence, read N- to C-terminus: Formamidopyrimidine-DNA glycosylase (294 aa).

The Schiff-base intermediate with DNA role is filled by Pro2. Glu3 serves as the catalytic Proton donor. Lys61 serves as the catalytic Proton donor; for beta-elimination activity. His104, Arg123, and Lys169 together coordinate DNA. An FPG-type zinc finger spans residues Ala255–Pro289. The active-site Proton donor; for delta-elimination activity is the Arg279.

This sequence belongs to the FPG family. As to quaternary structure, monomer. Zn(2+) is required as a cofactor.

It carries out the reaction Hydrolysis of DNA containing ring-opened 7-methylguanine residues, releasing 2,6-diamino-4-hydroxy-5-(N-methyl)formamidopyrimidine.. The catalysed reaction is 2'-deoxyribonucleotide-(2'-deoxyribose 5'-phosphate)-2'-deoxyribonucleotide-DNA = a 3'-end 2'-deoxyribonucleotide-(2,3-dehydro-2,3-deoxyribose 5'-phosphate)-DNA + a 5'-end 5'-phospho-2'-deoxyribonucleoside-DNA + H(+). Its function is as follows. Involved in base excision repair of DNA damaged by oxidation or by mutagenic agents. Acts as a DNA glycosylase that recognizes and removes damaged bases. Has a preference for oxidized purines, such as 7,8-dihydro-8-oxoguanine (8-oxoG). Has AP (apurinic/apyrimidinic) lyase activity and introduces nicks in the DNA strand. Cleaves the DNA backbone by beta-delta elimination to generate a single-strand break at the site of the removed base with both 3'- and 5'-phosphates. This is Formamidopyrimidine-DNA glycosylase from Nocardia farcinica (strain IFM 10152).